We begin with the raw amino-acid sequence, 72 residues long: Defensin-like protein 35 (72 aa).

The signal sequence occupies residues 1–22; that stretch reads MASNKISFSFVLCLYMCSLLDA. Intrachain disulfides connect Cys-32–Cys-58, Cys-44–Cys-67, and Cys-48–Cys-69.

This sequence belongs to the DEFL family.

It is found in the secreted. The polypeptide is Defensin-like protein 35 (Arabidopsis thaliana (Mouse-ear cress)).